The following is a 559-amino-acid chain: Membrane protein insertase YidC (559 aa).

A run of 6 helical transmembrane segments spans residues 5–25 (IVNL…WQYF), 332–352 (AIDF…MNFF), 355–375 (YVGN…LLMF), 429–449 (LPIL…YVTI), 474–494 (LFGL…WPIL), and 520–540 (FMPL…LIYW).

The protein belongs to the OXA1/ALB3/YidC family. Type 1 subfamily. Interacts with the Sec translocase complex via SecD. Specifically interacts with transmembrane segments of nascent integral membrane proteins during membrane integration.

It localises to the cell inner membrane. Required for the insertion and/or proper folding and/or complex formation of integral membrane proteins into the membrane. Involved in integration of membrane proteins that insert both dependently and independently of the Sec translocase complex, as well as at least some lipoproteins. Aids folding of multispanning membrane proteins. This Rickettsia bellii (strain OSU 85-389) protein is Membrane protein insertase YidC.